We begin with the raw amino-acid sequence, 976 residues long: Probable outer membrane protein PmpA (976 aa).

Positions 1 to 50 (MNQVIKTIALCYQKYISRASNKTFSIHNTLSLSLLPKCLLGSLIIYTSHA) are cleaved as a signal peptide. The Autotransporter domain maps to 671 to 976 (GNAIPNSLWS…SLSCGGYVGF (306 aa)).

The protein belongs to the PMP outer membrane protein family.

It is found in the secreted. Its subcellular location is the cell wall. It localises to the cell outer membrane. The chain is Probable outer membrane protein PmpA (pmpA) from Chlamydia muridarum (strain MoPn / Nigg).